A 338-amino-acid chain; its full sequence is Ketol-acid reductoisomerase (NADP(+)) (338 aa).

A KARI N-terminal Rossmann domain is found at Met1–Thr181. NADP(+) is bound by residues Tyr24–Gln27, Arg47, and Ser52. His107 is an active-site residue. NADP(+) is bound at residue Gly133. The KARI C-terminal knotted domain maps to Asn182–Ile327. Mg(2+)-binding residues include Asp190, Glu194, Glu226, and Glu230. Ser251 lines the substrate pocket.

This sequence belongs to the ketol-acid reductoisomerase family. It depends on Mg(2+) as a cofactor.

The enzyme catalyses (2R)-2,3-dihydroxy-3-methylbutanoate + NADP(+) = (2S)-2-acetolactate + NADPH + H(+). The catalysed reaction is (2R,3R)-2,3-dihydroxy-3-methylpentanoate + NADP(+) = (S)-2-ethyl-2-hydroxy-3-oxobutanoate + NADPH + H(+). The protein operates within amino-acid biosynthesis; L-isoleucine biosynthesis; L-isoleucine from 2-oxobutanoate: step 2/4. Its pathway is amino-acid biosynthesis; L-valine biosynthesis; L-valine from pyruvate: step 2/4. In terms of biological role, involved in the biosynthesis of branched-chain amino acids (BCAA). Catalyzes an alkyl-migration followed by a ketol-acid reduction of (S)-2-acetolactate (S2AL) to yield (R)-2,3-dihydroxy-isovalerate. In the isomerase reaction, S2AL is rearranged via a Mg-dependent methyl migration to produce 3-hydroxy-3-methyl-2-ketobutyrate (HMKB). In the reductase reaction, this 2-ketoacid undergoes a metal-dependent reduction by NADPH to yield (R)-2,3-dihydroxy-isovalerate. This chain is Ketol-acid reductoisomerase (NADP(+)), found in Azoarcus sp. (strain BH72).